The primary structure comprises 361 residues: Outer mitochondrial transmembrane helix translocase (361 aa).

The Mitochondrial intermembrane segment spans residues 1-15 (MVHAEAFSRPLSRNE). Residues 16 to 32 (VVGLIFRLTIFGAVTYF) traverse the membrane as a helical segment. Residues 33–361 (TIKWMVDAID…QSVLTHVCLD (329 aa)) are Cytoplasmic-facing. 133 to 140 (GPPGCGKT) contacts ATP. Serine 322 carries the post-translational modification Phosphoserine.

It belongs to the AAA ATPase family. MSP1 subfamily. In terms of assembly, interacts with GRIA2 and GRIP1 in an ATP-dependent manner. ATAD1-catalyzed ATP hydrolysis disrupts not only its binding to GRIA2 and GRIP1, but also interaction between GRIP1 and GRIA2, leading to AMPAR complex disassembly.

It is found in the mitochondrion outer membrane. It localises to the peroxisome membrane. The protein resides in the postsynaptic cell membrane. The catalysed reaction is [protein]-with a C-terminal TM segment(out) + ATP + H2O = [protein]-with a C-terminal TM segment(in) + ADP + phosphate + H(+). In terms of biological role, outer mitochondrial translocase required to remove mislocalized tail-anchored transmembrane proteins on mitochondria. Specifically recognizes and binds tail-anchored transmembrane proteins: acts as a dislocase that mediates the ATP-dependent extraction of mistargeted tail-anchored transmembrane proteins from the mitochondrion outer membrane. Also plays a critical role in regulating the surface expression of AMPA receptors (AMPAR), thereby regulating synaptic plasticity and learning and memory. Required for NMDA-stimulated AMPAR internalization and inhibition of GRIA1 and GRIA2 recycling back to the plasma membrane; these activities are ATPase-dependent. The chain is Outer mitochondrial transmembrane helix translocase from Rattus norvegicus (Rat).